The following is a 428-amino-acid chain: GTPase Obg (428 aa).

Residues 1–158 (MFVDQVKIYV…RDVILELKVL (158 aa)) enclose the Obg domain. Positions 159 to 329 (ADVGLVGFPS…LLFEVANLLE (171 aa)) constitute an OBG-type G domain. Residues 165 to 172 (GFPSVGKS), 190 to 194 (FTTIV), 212 to 215 (DLPG), 282 to 285 (NKMD), and 310 to 312 (SAV) contribute to the GTP site. The Mg(2+) site is built by serine 172 and threonine 192. The 79-residue stretch at 350–428 (KLETEGVKFD…ILEYEFEFID (79 aa)) folds into the OCT domain.

It belongs to the TRAFAC class OBG-HflX-like GTPase superfamily. OBG GTPase family. In terms of assembly, monomer. The cofactor is Mg(2+).

It is found in the cytoplasm. An essential GTPase which binds GTP, GDP and possibly (p)ppGpp with moderate affinity, with high nucleotide exchange rates and a fairly low GTP hydrolysis rate. Plays a role in control of the cell cycle, stress response, ribosome biogenesis and in those bacteria that undergo differentiation, in morphogenesis control. This Bacillus cereus (strain Q1) protein is GTPase Obg.